A 242-amino-acid chain; its full sequence is NAD-dependent protein deacetylase 1 (242 aa).

The 242-residue stretch at 1 to 242 (MTITSWLAAS…LNEQLAEVDP (242 aa)) folds into the Deacetylase sirtuin-type domain. Positions 19, 23, 30, 31, 97, 99, 100, and 115 each coordinate NAD(+). Phe-30 is a binding site for nicotinamide. 2 residues coordinate nicotinamide: Val-99 and Asp-100. His-115 functions as the Proton acceptor in the catalytic mechanism. Residues Cys-123, Cys-126, Cys-142, and Cys-144 each coordinate Zn(2+). Positions 182, 183, 207, and 226 each coordinate NAD(+).

The protein belongs to the sirtuin family. Class U subfamily. It depends on Zn(2+) as a cofactor.

The protein localises to the cytoplasm. The catalysed reaction is N(6)-acetyl-L-lysyl-[protein] + NAD(+) + H2O = 2''-O-acetyl-ADP-D-ribose + nicotinamide + L-lysyl-[protein]. NAD-dependent protein deacetylase which modulates the activities of several enzymes which are inactive in their acetylated form. The protein is NAD-dependent protein deacetylase 1 of Geobacillus kaustophilus (strain HTA426).